A 220-amino-acid chain; its full sequence is Ribose-5-phosphate isomerase A (220 aa).

Substrate-binding positions include 29–32 (TGST), 82–85 (DGCD), and 95–98 (KGGG). Glutamate 104 acts as the Proton acceptor in catalysis. Residue lysine 122 coordinates substrate.

It belongs to the ribose 5-phosphate isomerase family. As to quaternary structure, homodimer.

It catalyses the reaction aldehydo-D-ribose 5-phosphate = D-ribulose 5-phosphate. It functions in the pathway carbohydrate degradation; pentose phosphate pathway; D-ribose 5-phosphate from D-ribulose 5-phosphate (non-oxidative stage): step 1/1. Its function is as follows. Catalyzes the reversible conversion of ribose-5-phosphate to ribulose 5-phosphate. The sequence is that of Ribose-5-phosphate isomerase A from Laribacter hongkongensis (strain HLHK9).